Here is a 583-residue protein sequence, read N- to C-terminus: MSINTDESTWRTFKRLWTFIRLYKSGLAVAVVALIINAVSDTYMVSLLKPLLDEGFGSAESDFLRTLPLLVFGLMFIRGISSFVSTYCLSWVSGNVVMQVRRMVFNHYMQMPVSYFDKEKSGSLLSRITYDSEQVSAATSQALVSIVREGTSIIGLLVLMFYNSWQLSLVLILVAPVVAWAIGFVSKRFRKISKNMQTTMGIVTSSAEQMLKGHKVVLSYGGQEVEKSRFDVVSNQMRQQSMKLITAQAAANPIIQMIASIAIVVVLYLASVDTIKDQLTPGTFTVVFSAMFGLMRPLKALTNVTSQFQRGMAAAQTLFALVDLEPEKNTGTYSVERAKGEVNVKDISFTYEGAEKPALSHVSFDIPRGKTVALVGRSGSGKSTIANLFTRFYDVDSGEIQLDGVDVRDYELKNLRTQFALVSQNVHLFNDTIANNIAYAAGDKYSREDIERAAELAHAMEFISKMENGLDTMVGENGASLSGGQRQRVAIARALLRDAPVLILDEATSALDTESERAIQSALDELQKNKTVLVIAHRLSTIEKADQILVIDDGSVVERGSHSELIEKDGAYAQLHRIQFGEG.

5 helical membrane-spanning segments follow: residues 27–47 (LAVA…MVSL), 69–89 (LLVF…TYCL), 142–162 (ALVS…LMFY), 165–185 (WQLS…IGFV), and 249–269 (AAAN…VLYL). Residues 28–310 (AVAVVALIIN…LTNVTSQFQR (283 aa)) enclose the ABC transmembrane type-1 domain. The 237-residue stretch at 342–578 (VNVKDISFTY…DGAYAQLHRI (237 aa)) folds into the ABC transporter domain. 376–383 (GRSGSGKS) is an ATP binding site.

This sequence belongs to the ABC transporter superfamily. Lipid exporter (TC 3.A.1.106) family. As to quaternary structure, homodimer.

It is found in the cell inner membrane. The enzyme catalyses ATP + H2O + lipid A-core oligosaccharideSide 1 = ADP + phosphate + lipid A-core oligosaccharideSide 2.. Involved in lipopolysaccharide (LPS) biosynthesis. Translocates lipid A-core from the inner to the outer leaflet of the inner membrane. Transmembrane domains (TMD) form a pore in the inner membrane and the ATP-binding domain (NBD) is responsible for energy generation. The protein is ATP-dependent lipid A-core flippase of Vibrio vulnificus (strain CMCP6).